The primary structure comprises 276 residues: 4-deoxy-L-threo-5-hexosulose-uronate ketol-isomerase 1 (276 aa).

The Zn(2+) site is built by histidine 194, histidine 196, glutamate 201, and histidine 243.

It belongs to the KduI family. Requires Zn(2+) as cofactor.

The enzyme catalyses 5-dehydro-4-deoxy-D-glucuronate = 3-deoxy-D-glycero-2,5-hexodiulosonate. It participates in glycan metabolism; pectin degradation; 2-dehydro-3-deoxy-D-gluconate from pectin: step 4/5. Functionally, catalyzes the isomerization of 5-dehydro-4-deoxy-D-glucuronate to 3-deoxy-D-glycero-2,5-hexodiulosonate. This chain is 4-deoxy-L-threo-5-hexosulose-uronate ketol-isomerase 1 (kduI1), found in Enterococcus faecalis (strain ATCC 700802 / V583).